Reading from the N-terminus, the 464-residue chain is Arginine biosynthesis bifunctional protein ArgJ, chloroplastic (464 aa).

Substrate contacts are provided by Thr-208, Lys-234, Thr-245, Glu-332, Asn-459, and Thr-464. The Nucleophile role is filled by Thr-245.

This sequence belongs to the ArgJ family. In terms of assembly, heterodimer of an alpha and a beta chain.

It is found in the plastid. It localises to the chloroplast. The catalysed reaction is N(2)-acetyl-L-ornithine + L-glutamate = N-acetyl-L-glutamate + L-ornithine. It catalyses the reaction L-glutamate + acetyl-CoA = N-acetyl-L-glutamate + CoA + H(+). It participates in amino-acid biosynthesis; L-arginine biosynthesis; L-ornithine and N-acetyl-L-glutamate from L-glutamate and N(2)-acetyl-L-ornithine (cyclic): step 1/1. It functions in the pathway amino-acid biosynthesis; L-arginine biosynthesis; N(2)-acetyl-L-ornithine from L-glutamate: step 1/4. Catalyzes two activities which are involved in the cyclic version of arginine biosynthesis: the synthesis of acetylglutamate from glutamate and acetyl-CoA, and of ornithine by transacetylation between acetylornithine and glutamate. This chain is Arginine biosynthesis bifunctional protein ArgJ, chloroplastic, found in Zea mays (Maize).